Reading from the N-terminus, the 489-residue chain is Glycogen synthase (489 aa).

Residue arginine 20 coordinates ADP-alpha-D-glucose.

It belongs to the glycosyltransferase 1 family. Bacterial/plant glycogen synthase subfamily.

The enzyme catalyses [(1-&gt;4)-alpha-D-glucosyl](n) + ADP-alpha-D-glucose = [(1-&gt;4)-alpha-D-glucosyl](n+1) + ADP + H(+). The protein operates within glycan biosynthesis; glycogen biosynthesis. Functionally, synthesizes alpha-1,4-glucan chains using ADP-glucose. This Chlorobium phaeovibrioides (strain DSM 265 / 1930) (Prosthecochloris vibrioformis (strain DSM 265)) protein is Glycogen synthase.